A 121-amino-acid polypeptide reads, in one-letter code: Protein TusC (121 aa).

Belongs to the DsrF/TusC family. In terms of assembly, heterohexamer, formed by a dimer of trimers. The hexameric TusBCD complex contains 2 copies each of TusB, TusC and TusD. The TusBCD complex interacts with TusE.

It is found in the cytoplasm. Its function is as follows. Part of a sulfur-relay system required for 2-thiolation of 5-methylaminomethyl-2-thiouridine (mnm(5)s(2)U) at tRNA wobble positions. This Yersinia pestis bv. Antiqua (strain Antiqua) protein is Protein TusC.